The following is a 64-amino-acid chain: Large ribosomal subunit protein bL35 (64 aa).

Positions 1–56 are disordered; it reads MPKMKSNKSVAARFKLTGSGQLKRTRPGKRHKLSKKSSQEKRNLSKQPLVDKGQVG. The segment covering 23–35 has biased composition (basic residues); the sequence is KRTRPGKRHKLSK.

Belongs to the bacterial ribosomal protein bL35 family.

The chain is Large ribosomal subunit protein bL35 from Chlamydia abortus (strain DSM 27085 / S26/3) (Chlamydophila abortus).